Consider the following 636-residue polypeptide: ATP-dependent DNA helicase YoaA (636 aa).

The Helicase ATP-binding domain maps to 10 to 272 (QLAKAIPGFK…KDTQQLQKCA (263 aa)). 45 to 52 (AGTGTGKT) contributes to the ATP binding site. 4 residues coordinate [4Fe-4S] cluster: C108, C168, C173, and C179. The DEAH box signature appears at 225-228 (DEAH).

It belongs to the helicase family. DinG subfamily. As to quaternary structure, interacts with the DNA polymerase III subunit Chi (holC), probably as a 1:1 complex. Requires [4Fe-4S] cluster as cofactor. Mg(2+) serves as cofactor.

It carries out the reaction Couples ATP hydrolysis with the unwinding of duplex DNA at the replication fork by translocating in the 5'-3' direction. This creates two antiparallel DNA single strands (ssDNA). The leading ssDNA polymer is the template for DNA polymerase III holoenzyme which synthesizes a continuous strand.. The catalysed reaction is ATP + H2O = ADP + phosphate + H(+). Its activity is regulated as follows. Non-hydrolyzable ATP analogs ATP-gamma-S and adenylyl-imidodiphosphate (AMP-PNP) inhibit helicase activity. In terms of biological role, DNA-dependent ATPase and 5'-3' DNA helicase. Has single-stranded (ss)DNA-dependent ATPase activity and 5'-3' helicase activity on forked DNA; both activities were measure in a YoaA:HolC (chi) complex. Requires a 20-35 nucleotide (nt) 5'-ssDNA tail; dsDNA with a 20 nt gap is also unwound. Unwinds damaged 3' nascent ends (such as those terminated by 3' azidothymidine (AZT), 3' dideoxy-C or an abasic site on the translocating strand), to promote repair and AZT excision. Without HolC the protein has much lower activity which could be due to YoaA instability or helicase stimulation by HolC. Genetically identified as involved in the repair of replication forks and tolerance of the chain-terminating nucleoside analog AZT. May act in proofreading during nucleotide misincorporation, it appears to aid in the removal of potential A-to-T transversion mutations in ndk mutants. In Escherichia coli (strain K12), this protein is ATP-dependent DNA helicase YoaA (yoaA).